The primary structure comprises 337 residues: tRNA N6-adenosine threonylcarbamoyltransferase (337 aa).

2 residues coordinate Fe cation: histidine 110 and histidine 114. Residues valine 132–glycine 136, aspartate 165, glycine 178, aspartate 182, and asparagine 268 contribute to the substrate site. A Fe cation-binding site is contributed by aspartate 293.

The protein belongs to the KAE1 / TsaD family. The cofactor is Fe(2+).

It localises to the cytoplasm. The enzyme catalyses L-threonylcarbamoyladenylate + adenosine(37) in tRNA = N(6)-L-threonylcarbamoyladenosine(37) in tRNA + AMP + H(+). In terms of biological role, required for the formation of a threonylcarbamoyl group on adenosine at position 37 (t(6)A37) in tRNAs that read codons beginning with adenine. Is involved in the transfer of the threonylcarbamoyl moiety of threonylcarbamoyl-AMP (TC-AMP) to the N6 group of A37, together with TsaE and TsaB. TsaD likely plays a direct catalytic role in this reaction. The chain is tRNA N6-adenosine threonylcarbamoyltransferase from Sulfurihydrogenibium sp. (strain YO3AOP1).